We begin with the raw amino-acid sequence, 111 residues long: MGKRIDDETLKKIRLPKEGEIFGVVEKMLGNDRVQVRCVDGKTRVARIPGKMRKRVWIREGDVVLVKPWEFQPERADVTWRYTRVQVDWLKRKGKLDERVTKLLEEIIPGA.

The S1-like domain occupies 11-83 (KKIRLPKEGE…ERADVTWRYT (73 aa)).

This sequence belongs to the eIF-1A family.

Its function is as follows. Seems to be required for maximal rate of protein biosynthesis. Enhances ribosome dissociation into subunits and stabilizes the binding of the initiator Met-tRNA(I) to 40 S ribosomal subunits. The sequence is that of Translation initiation factor 1A (eIF1A) from Methanopyrus kandleri (strain AV19 / DSM 6324 / JCM 9639 / NBRC 100938).